The primary structure comprises 566 residues: Heat shock protein 70 homolog C57A7.12 (566 aa).

Residue 39–46 (AFNRDGKT) coordinates ATP. Phosphoserine is present on residues Ser-86 and Ser-500.

This sequence belongs to the heat shock protein 70 family.

The protein is Heat shock protein 70 homolog C57A7.12 of Schizosaccharomyces pombe (strain 972 / ATCC 24843) (Fission yeast).